We begin with the raw amino-acid sequence, 342 residues long: Protein-ribulosamine 3-kinase, chloroplastic (342 aa).

The N-terminal 46 residues, 1 to 46 (MANVALLSAASPSTSSAAPRLRHVARRRPSRRSACPRSAASRLSIM), are a transit peptide targeting the chloroplast. Residue 141 to 143 (EFI) coordinates ATP. D246 serves as the catalytic Proton acceptor.

It belongs to the fructosamine kinase family.

The protein localises to the plastid. It is found in the chloroplast. The catalysed reaction is N(6)-D-ribulosyl-L-lysyl-[protein] + ATP = N(6)-(3-O-phospho-D-ribulosyl)-L-lysyl-[protein] + ADP + H(+). It catalyses the reaction N(6)-(D-erythrulosyl)-L-lysyl-[protein] + ATP = N(6)-(3-O-phospho-D-erythrulosyl)-L-lysyl-[protein] + ADP + H(+). Its function is as follows. Initiates a process leading to the deglycation of proteins. Phosphorylates low-molecular-mass and protein-bound erythrulosamines and ribulosamines, but not fructosamines or psicosamines, on the third carbon of the sugar moiety. Protein-bound erythrulosamine 3-phosphates and ribulosamine 3-phosphates are unstable and decompose under physiological conditions. This chain is Protein-ribulosamine 3-kinase, chloroplastic, found in Oryza sativa subsp. indica (Rice).